A 425-amino-acid chain; its full sequence is Probable sucrose-phosphatase 3a (425 aa).

It belongs to the sucrose phosphatase family. Homodimer. Mg(2+) is required as a cofactor.

It catalyses the reaction sucrose 6(F)-phosphate + H2O = sucrose + phosphate. Its pathway is glycan biosynthesis; sucrose biosynthesis; sucrose from D-fructose 6-phosphate and UDP-alpha-D-glucose: step 2/2. Its function is as follows. Catalyzes the final step of sucrose synthesis. This is Probable sucrose-phosphatase 3a (SPP3A) from Arabidopsis thaliana (Mouse-ear cress).